Consider the following 513-residue polypeptide: cAMP-regulated M3R protein (513 aa).

To D.discoideum protein M3L.

The chain is cAMP-regulated M3R protein (prtB) from Dictyostelium discoideum (Social amoeba).